The primary structure comprises 1087 residues: Gelsolin-related protein of 125 kDa (1087 aa).

Residues 1–40 (MEEDNIVDSKEIENNVEDKKEETPSSSPSPSSSLQQQQEE) are disordered. Positions 7–23 (VDSKEIENNVEDKKEET) are enriched in basic and acidic residues. Residues 24–40 (PSSSPSPSSSLQQQQEE) are compositionally biased toward low complexity. Gelsolin-like repeat units lie at residues 73–146 (PFHF…PTFL), 183–286 (FLFK…FSKW), 335–442 (GKLL…FGTE), and 465–538 (TQLF…DNFW). A coiled-coil region spans residues 550–598 (INTFINENKEEKEKEEEEKEEEEEEEEEEEEEEEEEKDNNKTTTIIKHL). The interval 555-592 (NENKEEKEKEEEEKEEEEEEEEEEEEEEEEEKDNNKTT) is disordered. Residues 562-586 (EKEEEEKEEEEEEEEEEEEEEEEEK) are compositionally biased toward acidic residues. One copy of the Gelsolin-like 5 repeat lies at 614–692 (IFKADQINPF…EQYNESPLFK (79 aa)). Residues 710 to 912 (IISYKQKLAE…ETVNEENEVG (203 aa)) are a coiled coil. Basic and acidic residues-rich tracts occupy residues 732–770 (KQQQ…KEEE), 779–808 (EEVK…KEVN), 817–840 (EEVK…KEEE), and 849–900 (EEVK…KVNE). The interval 732–1087 (KQQQEQEQEQ…HNRSSSLTHA (356 aa)) is disordered. A compositionally biased stretch (acidic residues) spans 901–910 (ENETVNEENE). Composition is skewed to polar residues over residues 925 to 939 (ANSS…NEGS) and 950 to 961 (EPITPSVVSSSG). Positions 983 to 1002 (QGRKGGRKSHGKNQPQHKKN) are enriched in basic residues. Polar residues predominate over residues 1018–1040 (KSLNLDIDNQSFDLNSINNNNSV). The segment covering 1047–1065 (SSPLSFSSSSINSNSTHNT) has biased composition (low complexity). Over residues 1066 to 1080 (PSKKNKNKNKKKHNR) the composition is skewed to basic residues.

The protein belongs to the villin/gelsolin family. Interacts with rasD and abpC.

The protein localises to the cytoplasmic vesicle. Its function is as follows. Involved in phototaxis. Required for coupling photodetection to the locomotory machinery of slugs. May be essential in the natural environment for the propagation of spores. The protein is Gelsolin-related protein of 125 kDa (gnrA) of Dictyostelium discoideum (Social amoeba).